The sequence spans 196 residues: MTSCSNTCGSRRAQADTEGGYQQRYGVRSYLHQFYEDCTASIWEYEDDFQIQRSPNRWSSVFWKVGLISGTVFVILGLTVLAVGFLVPPKIEAFGEADFMVVDTHAVKYNGALDTCKLAGAVLFCIGGTSMAGCLLMSVFAKSYSKEEKFLQQKFKERIADIKAHTQPITKAPGPGDTKIPVTLSRVQNVQPLSAT.

A run of 2 helical transmembrane segments spans residues 67–87 (LISG…GFLV) and 121–141 (AVLF…SVFA).

It belongs to the VMP family. In terms of tissue distribution, expressed predominantly in brain. Also weakly expressed in lung and spleen. In brain, expressed strongly in nerve fibers of the cerebral cortex, anterior cerebral nuclei, hypothalamus, amygdaloid complex, brain stem of the metaencephalon and medulla oblongata, and moderately expressed in soma of neurons of the dentate gyrus of the hippocampus and Purkinje cells of the cerebellum.

It localises to the membrane. The protein localises to the cell projection. It is found in the neuron projection. Its function is as follows. May play an important role in neural organelle transport, and in transduction of nerve signals or in nerve growth. May play a role in neurite extension. The protein is Neurensin-1 of Mus musculus (Mouse).